The chain runs to 238 residues: Polynucleotide 3'-phosphatase (238 aa).

Belongs to the DNA 3' phosphatase family.

Its subcellular location is the nucleus. The catalysed reaction is a 3'end (2'-deoxyribonucleotide 3'-phosphate)-DNA + H2O = a 3'-end 2'-deoxyribonucleotide-DNA + phosphate. Dephosphorylate DNA's 3'-phosphate termini. Has a role in the repair of breaks in single-stranded DNA. This chain is Polynucleotide 3'-phosphatase (TPP1), found in Saccharomyces cerevisiae (strain ATCC 204508 / S288c) (Baker's yeast).